The primary structure comprises 687 residues: Glycine--tRNA ligase beta subunit (687 aa).

Belongs to the class-II aminoacyl-tRNA synthetase family. Tetramer of two alpha and two beta subunits.

It localises to the cytoplasm. It catalyses the reaction tRNA(Gly) + glycine + ATP = glycyl-tRNA(Gly) + AMP + diphosphate. The chain is Glycine--tRNA ligase beta subunit from Ruegeria sp. (strain TM1040) (Silicibacter sp.).